Consider the following 427-residue polypeptide: Glutamate-1-semialdehyde 2,1-aminomutase (427 aa).

K265 bears the N6-(pyridoxal phosphate)lysine mark.

It belongs to the class-III pyridoxal-phosphate-dependent aminotransferase family. HemL subfamily. In terms of assembly, homodimer. The cofactor is pyridoxal 5'-phosphate.

The protein resides in the cytoplasm. The enzyme catalyses (S)-4-amino-5-oxopentanoate = 5-aminolevulinate. Its pathway is porphyrin-containing compound metabolism; protoporphyrin-IX biosynthesis; 5-aminolevulinate from L-glutamyl-tRNA(Glu): step 2/2. This Bordetella petrii (strain ATCC BAA-461 / DSM 12804 / CCUG 43448) protein is Glutamate-1-semialdehyde 2,1-aminomutase.